The following is a 484-amino-acid chain: UDP-N-acetylmuramate--L-alanine ligase (484 aa).

125-131 (GTHGKTT) serves as a coordination point for ATP.

This sequence belongs to the MurCDEF family.

It localises to the cytoplasm. The enzyme catalyses UDP-N-acetyl-alpha-D-muramate + L-alanine + ATP = UDP-N-acetyl-alpha-D-muramoyl-L-alanine + ADP + phosphate + H(+). The protein operates within cell wall biogenesis; peptidoglycan biosynthesis. Its function is as follows. Cell wall formation. The chain is UDP-N-acetylmuramate--L-alanine ligase from Buchnera aphidicola subsp. Acyrthosiphon pisum (strain 5A).